The chain runs to 843 residues: Phosphatidylinositol-glycan-specific phospholipase D (843 aa).

A signal peptide spans Met1 to Ser23. N-linked (GlcNAc...) asparagine glycosylation is found at Asn94, Asn271, Asn292, Asn308, and Asn322. 7 FG-GAP repeats span residues Ser368–Pro429, Asp435–Ser498, Ser500–Lys560, Thr564–Arg625, Gln635–Arg695, Ala707–Asp773, and Gln791–Asp843. Asn483, Asn502, Asn592, Asn605, and Asn661 each carry an N-linked (GlcNAc...) asparagine glycan.

It belongs to the GPLD1 family. As to quaternary structure, monomer. Glycosylated.

Its subcellular location is the secreted. It carries out the reaction a 6-(alpha-D-glucosaminyl)-1-(1,2-diacyl-sn-glycero-3-phospho)-1D-myo-inositol + H2O = 6-(alpha-D-glucosaminyl)-1D-myo-inositol + a 1,2-diacyl-sn-glycero-3-phosphate + H(+). This protein hydrolyzes the inositol phosphate linkage in proteins anchored by phosphatidylinositol glycans (GPI-anchor) thus releasing these proteins from the membrane. The chain is Phosphatidylinositol-glycan-specific phospholipase D (Gpld1) from Rattus norvegicus (Rat).